Consider the following 287-residue polypeptide: Protease HtpX (287 aa).

A run of 2 helical transmembrane segments spans residues isoleucine 4–isoleucine 24 and glycine 33–isoleucine 53. A Zn(2+)-binding site is contributed by histidine 139. Glutamate 140 is a catalytic residue. Residue histidine 143 coordinates Zn(2+). Helical transmembrane passes span leucine 154–isoleucine 174 and alanine 195–phenylalanine 215. Zn(2+) is bound at residue glutamate 220.

Belongs to the peptidase M48B family. Zn(2+) is required as a cofactor.

Its subcellular location is the cell inner membrane. This Shewanella sp. (strain ANA-3) protein is Protease HtpX.